The sequence spans 104 residues: Cell division protein FtsL (104 aa).

The Cytoplasmic segment spans residues M1–K20. The helical transmembrane segment at W21 to S43 threads the bilayer. The Periplasmic segment spans residues R44–P104.

Belongs to the FtsL family. In terms of assembly, part of a complex composed of FtsB, FtsL and FtsQ.

It localises to the cell inner membrane. In terms of biological role, essential cell division protein. May link together the upstream cell division proteins, which are predominantly cytoplasmic, with the downstream cell division proteins, which are predominantly periplasmic. The chain is Cell division protein FtsL from Shewanella oneidensis (strain ATCC 700550 / JCM 31522 / CIP 106686 / LMG 19005 / NCIMB 14063 / MR-1).